Reading from the N-terminus, the 253-residue chain is Protein phosphatase CheZ (253 aa).

Residues 1-84 (MTQEELDALM…EWPPPPPTEE (84 aa)) are disordered. Basic and acidic residues predominate over residues 21–69 (LETKEETKEEAKEEAKEEAKEEAKEKEEIKEESSSQKMTVKKEDAEKYG).

The protein belongs to the CheZ family. As to quaternary structure, interacts with ChePep; this interaction is essential for each other polar localization.

It localises to the cytoplasm. Its function is as follows. Plays an important role in bacterial chemotaxis signal transduction pathway by accelerating the dephosphorylation of phosphorylated CheY (CheY-P). Also dephosphorylates CheV2 but not CheV1 or CheV3. In addition, forms a distinct chemotaxis regulatory complex with ChePep independently of the core chemotaxis signaling proteins. This chain is Protein phosphatase CheZ, found in Helicobacter pylori (strain ATCC 700392 / 26695) (Campylobacter pylori).